Consider the following 264-residue polypeptide: Protein OXIDATIVE STRESS 3 LIKE 1 (264 aa).

Disordered stretches follow at residues 1-76 and 178-225; these read MDCV…GPLE and TGEG…QGSF. Low complexity predominate over residues 29–43; the sequence is PSDSSSSPSSSASSS. The span at 47–56 shows a compositional bias: basic and acidic residues; it reads NSDDGEKSSE. Residues 57-67 show a composition bias toward acidic residues; it reads DGGDDAGENEV. Residues 179-201 show a composition bias toward low complexity; the sequence is GEGSSSGGDSSPGSSPTTSGSPP. Residues 203–212 are compositionally biased toward basic residues; that stretch reads QLHHHQHQMK.

The protein localises to the nucleus. Functionally, promotes slightly the tolerance to zinc (Zn) and to oxidizing chemicals (e.g. diamide). This Arabidopsis thaliana (Mouse-ear cress) protein is Protein OXIDATIVE STRESS 3 LIKE 1.